The following is a 361-amino-acid chain: Peptide chain release factor 1 (361 aa).

Residue Gln235 is modified to N5-methylglutamine.

This sequence belongs to the prokaryotic/mitochondrial release factor family. Post-translationally, methylated by PrmC. Methylation increases the termination efficiency of RF1.

It localises to the cytoplasm. In terms of biological role, peptide chain release factor 1 directs the termination of translation in response to the peptide chain termination codons UAG and UAA. The chain is Peptide chain release factor 1 from Chlamydia abortus (strain DSM 27085 / S26/3) (Chlamydophila abortus).